The following is a 548-amino-acid chain: DNA-binding protein REPIN1 (548 aa).

The segment at 1–47 is disordered; it reads MLERRCRGPTAMGPAHPWLFSGPSQESSQPNRGLRYQGKSVAQPGGP. Over residues 22 to 31 the composition is skewed to polar residues; that stretch reads GPSQESSQPN. Phosphoserine is present on S27. Position 39 is an N6-acetyllysine (K39). The segment at 53–75 adopts a C2H2-type 1; atypical zinc-finger fold; that stretch reads HRCAHCRKRFPGWVALWLHTRRC. C2H2-type zinc fingers lie at residues 81-103 and 112-134; these read LPCH…LQVH and FICH…LRAH. The C2H2-type 4; atypical zinc finger occupies 141-163; the sequence is ITCPECNKRFWRQKQLRAHLRRC. 11 C2H2-type zinc fingers span residues 173-195, 232-254, 260-282, 288-310, 356-378, 384-406, 412-434, 440-462, 468-490, 496-518, and 524-546; these read FICG…KRVH, FQCA…RRVH, HQCP…RRIH, YPCT…SKIH, HSCT…QRQH, FTCT…SRVH, FACE…RRDH, FVCP…RRIH, YVCP…RRIH, YACP…RKSH, and FCCA…QKKH. K272 is modified (N6-acetyllysine).

As to quaternary structure, homodimers and homomultimers. Found in a complex with RIP60 and RIP100. As to expression, expressed in the liver and in subcutaneous and visceral adipose tissue.

Its subcellular location is the nucleus. It localises to the cytoplasm. The protein localises to the cytosol. Sequence-specific double-stranded DNA-binding protein. Binds ATT-rich and T-rich DNA sequences and facilitates DNA bending. May regulate the expression of genes involved in cellular fatty acid import, including SCARB1/CD36, and genes involved in lipid droplet formation. May regulate the expression of LCN2, and thereby influence iron metabolism and apoptosis-related pathways. May regulate the expression of genes involved in glucose transport. This Rattus norvegicus (Rat) protein is DNA-binding protein REPIN1 (Repin1).